The chain runs to 177 residues: Retrograde regulation protein 1 (177 aa).

Residues 1 to 24 (MSSIPAGTDPGSCGANFKNDRKRR) are disordered. The region spanning 11–96 (GSCGANFKND…TQAVEYISHL (86 aa)) is the bHLH domain. Ser-50 and Ser-52 each carry phosphoserine. 2 disordered regions span residues 52 to 82 (SNDTLSESTPGALGLSSKAKGTGTKDGKPNK) and 147 to 177 (LAATNDDSVRPPAKRLSSFEYGGYGEYGNGS). The residue at position 60 (Thr-60) is a Phosphothreonine. Residues 168-177 (GGYGEYGNGS) show a composition bias toward gly residues.

As to quaternary structure, binds DNA as a heterodimer with RTG3.

It localises to the nucleus. In terms of biological role, required for a novel path of interorganelle communication between mitochondria, peroxisomes and the nucleus, thereby maintaining a functional metabolic interaction between the tricarboxylic acid and glyoxylate cycles. Transcription factor that regulates CIT2 gene expression. Binds to two identical sites oriented as inverted repeats 28 bp apart in a regulatory upstream activation sequence element (UASR) in the CIT2 promoter. The core binding site is 5'-GGTCAC-3'. The polypeptide is Retrograde regulation protein 1 (RTG1) (Saccharomyces cerevisiae (strain ATCC 204508 / S288c) (Baker's yeast)).